The primary structure comprises 160 residues: Cytochrome b6-f complex subunit 4 (160 aa).

Helical transmembrane passes span 36-56, 95-115, and 131-151; these read LLYIFPVVIFGTIACNVGLAV, LLGVLLMAAVPAGLLTVPFLE, and TVFLIGTVVSIWLGIGAAMPI.

The protein belongs to the cytochrome b family. PetD subfamily. As to quaternary structure, the 4 large subunits of the cytochrome b6-f complex are cytochrome b6, subunit IV (17 kDa polypeptide, petD), cytochrome f and the Rieske protein, while the 4 small subunits are petG, petL, petM and petN. The complex functions as a dimer.

The protein localises to the plastid. It is found in the chloroplast thylakoid membrane. Component of the cytochrome b6-f complex, which mediates electron transfer between photosystem II (PSII) and photosystem I (PSI), cyclic electron flow around PSI, and state transitions. The chain is Cytochrome b6-f complex subunit 4 from Zygnema circumcarinatum (Green alga).